We begin with the raw amino-acid sequence, 268 residues long: Imidazole glycerol phosphate synthase subunit HisF (268 aa).

Residues D12 and D131 contribute to the active site.

It belongs to the HisA/HisF family. Heterodimer of HisH and HisF.

It localises to the cytoplasm. The catalysed reaction is 5-[(5-phospho-1-deoxy-D-ribulos-1-ylimino)methylamino]-1-(5-phospho-beta-D-ribosyl)imidazole-4-carboxamide + L-glutamine = D-erythro-1-(imidazol-4-yl)glycerol 3-phosphate + 5-amino-1-(5-phospho-beta-D-ribosyl)imidazole-4-carboxamide + L-glutamate + H(+). It functions in the pathway amino-acid biosynthesis; L-histidine biosynthesis; L-histidine from 5-phospho-alpha-D-ribose 1-diphosphate: step 5/9. Its function is as follows. IGPS catalyzes the conversion of PRFAR and glutamine to IGP, AICAR and glutamate. The HisF subunit catalyzes the cyclization activity that produces IGP and AICAR from PRFAR using the ammonia provided by the HisH subunit. This is Imidazole glycerol phosphate synthase subunit HisF from Methanoculleus marisnigri (strain ATCC 35101 / DSM 1498 / JR1).